A 291-amino-acid chain; its full sequence is 33 kDa chaperonin (291 aa).

2 disulfide bridges follow: C237/C239 and C270/C273.

The protein belongs to the HSP33 family. Under oxidizing conditions two disulfide bonds are formed involving the reactive cysteines. Under reducing conditions zinc is bound to the reactive cysteines and the protein is inactive.

It localises to the cytoplasm. Redox regulated molecular chaperone. Protects both thermally unfolding and oxidatively damaged proteins from irreversible aggregation. Plays an important role in the bacterial defense system toward oxidative stress. The protein is 33 kDa chaperonin of Clostridioides difficile (strain 630) (Peptoclostridium difficile).